Here is a 44-residue protein sequence, read N- to C-terminus: Protein PsbN (44 aa).

Residues 6-26 (FFFTIFLWFFLLSITAYSIYV) form a helical membrane-spanning segment.

The protein belongs to the PsbN family.

The protein resides in the plastid. It is found in the chloroplast thylakoid membrane. In terms of biological role, may play a role in photosystem I and II biogenesis. The chain is Protein PsbN from Stigeoclonium helveticum (Green alga).